Consider the following 223-residue polypeptide: N-acetylmuramate alpha-1-phosphate uridylyltransferase (223 aa).

UTP is bound by residues 11–13 (GER) and Lys23. Asn105 contributes to the substrate binding site. Asp107 provides a ligand contact to Mg(2+). Asp140 and Asp205 together coordinate substrate. Asp205 contributes to the Mg(2+) binding site.

It belongs to the nucleotidyltransferase MurU family. As to quaternary structure, monomer. Mg(2+) serves as cofactor.

It carries out the reaction N-acetyl-alpha-D-muramate 1-phosphate + UDP + H(+) = UDP-N-acetyl-alpha-D-muramate + phosphate. It functions in the pathway cell wall biogenesis; peptidoglycan recycling. With respect to regulation, is completely inhibited by EDTA in vitro. Functionally, catalyzes the formation of UDP-N-acetylmuramate (UDP-MurNAc), a crucial precursor of the bacterial peptidoglycan cell wall, from UTP and MurNAc-alpha-1P. Is involved in peptidoglycan recycling as part of a cell wall recycling pathway that bypasses de novo biosynthesis of the peptidoglycan precursor UDP-MurNAc. Plays a role in intrinsic resistance to fosfomycin, which targets the de novo synthesis of UDP-MurNAc. Is not able to use GlcNAc-alpha-1P and GalNAc-alpha-1P as substrates. Cannot accept other nucleotide triphosphates (ATP, CTP, TTP, or GTP) than UTP. The protein is N-acetylmuramate alpha-1-phosphate uridylyltransferase of Pseudomonas putida (strain ATCC 47054 / DSM 6125 / CFBP 8728 / NCIMB 11950 / KT2440).